A 277-amino-acid chain; its full sequence is 3-methyl-2-oxobutanoate hydroxymethyltransferase (277 aa).

2 residues coordinate Mg(2+): Asp53 and Asp96. Residues Asp53–Ser54, Asp96, and Lys126 contribute to the 3-methyl-2-oxobutanoate site. Position 128 (Glu128) interacts with Mg(2+). Catalysis depends on Glu195, which acts as the Proton acceptor.

Belongs to the PanB family. In terms of assembly, homodecamer; pentamer of dimers. Mg(2+) serves as cofactor.

The protein resides in the cytoplasm. The catalysed reaction is 3-methyl-2-oxobutanoate + (6R)-5,10-methylene-5,6,7,8-tetrahydrofolate + H2O = 2-dehydropantoate + (6S)-5,6,7,8-tetrahydrofolate. It functions in the pathway cofactor biosynthesis; (R)-pantothenate biosynthesis; (R)-pantoate from 3-methyl-2-oxobutanoate: step 1/2. Functionally, catalyzes the reversible reaction in which hydroxymethyl group from 5,10-methylenetetrahydrofolate is transferred onto alpha-ketoisovalerate to form ketopantoate. This is 3-methyl-2-oxobutanoate hydroxymethyltransferase from Chlorobaculum parvum (strain DSM 263 / NCIMB 8327) (Chlorobium vibrioforme subsp. thiosulfatophilum).